Reading from the N-terminus, the 105-residue chain is Small ribosomal subunit protein uS17 (105 aa).

The protein belongs to the universal ribosomal protein uS17 family. Part of the 30S ribosomal subunit.

One of the primary rRNA binding proteins, it binds specifically to the 5'-end of 16S ribosomal RNA. The protein is Small ribosomal subunit protein uS17 of Thermus thermophilus (strain ATCC BAA-163 / DSM 7039 / HB27).